Consider the following 1703-residue polypeptide: Mediator of RNA polymerase II transcription subunit 14 (1703 aa).

The span at 755–766 (LSQTADLATSSA) shows a compositional bias: polar residues. The disordered stretch occupies residues 755 to 781 (LSQTADLATSSAGPLLRKDQKPRKRSA).

The protein belongs to the Mediator complex subunit 14 family. As to quaternary structure, component of the Mediator complex. Interacts with CDKE-1, HDA19 and LUG. Interacts with PTAC12/HMR/PAP5 and PIF4. In terms of tissue distribution, expressed in roots, stems, developing embryos, young leaf primordia, shoot apical meristems, inflorescence meristems, tapetum in anthers, ovules and floral organ primordia, but not in mature organs.

The protein localises to the nucleus. Functionally, component of the Mediator complex, a coactivator involved in the regulated transcription of nearly all RNA polymerase II-dependent genes. Mediator functions as a bridge to convey information from gene-specific regulatory proteins to the basal RNA polymerase II transcription machinery. The Mediator complex, having a compact conformation in its free form, is recruited to promoters by direct interactions with regulatory proteins and serves for the assembly of a functional pre-initiation complex with RNA polymerase II and the general transcription factors. Binds to G-box (5'-CACGTG-3')-containing regions of target genes promoters (e.g. IAA29 and IAA19). Involved in defining the duration of cell proliferation. Element of a PIF4/HMR/MED14-dependent thermoresponsive process; required for thermomorphogenetic hypocotyl growth in response to daytime warm temperature elicitation by associating to the promoters of thermoresponsive growth-relevant genes (e.g. mainly involved in biosynthesis and signaling of the phytohormone auxin); this also process implies PIF4 and its transcriptional coactivator PTAC12/HMR/PAP5 to promote the expression of target genes. The protein is Mediator of RNA polymerase II transcription subunit 14 of Arabidopsis thaliana (Mouse-ear cress).